Reading from the N-terminus, the 317-residue chain is DNA repair nuclease/redox regulator APEX1 (317 aa).

A disordered region spans residues 1–58 (MPKRGKKAAADDGEEPKSEPETKKSKGAAKKTEKEAAGEGPVLYEDPPDQKTSPSGKS). The necessary for interaction with YBX1, binding to RNA, association together with NPM1 to rRNA, endoribonuclease activity on abasic RNA and localization in the nucleoli stretch occupies residues 2–32 (PKRGKKAAADDGEEPKSEPETKKSKGAAKKT). N6-acetyllysine; by EP300 occurs at positions 6 and 7. The Nuclear localization signal (NLS) signature appears at 8-12 (AAADD). Positions 15–37 (EPKSEPETKKSKGAAKKTEKEAA) are enriched in basic and acidic residues. Residue Ser18 is modified to Phosphoserine. The tract at residues 22-32 (TKKSKGAAKKT) is necessary for interaction with NPM1 and for efficient rRNA binding. N6-acetyllysine is present on residues Lys26, Lys30, Lys31, and Lys34. Residue Ser53 is modified to Phosphoserine. The short motif at 63–79 (ICSWNVDGLRAWIKKKG) is the Nuclear export signal (NES) element. At Cys64 the chain carries S-nitrosocysteine; alternate. A disulfide bond links Cys64 and Cys92. Asp69 is a Mg(2+) binding site. Cys92 bears the S-nitrosocysteine; alternate mark. Glu95 is a Mg(2+) binding site. Residue Tyr170 is part of the active site. Position 196 is an N6-acetyllysine (Lys196). Residues Asp209 and Asn211 each coordinate Mg(2+). Asp209 functions as the Proton donor/acceptor in the catalytic mechanism. Thr232 bears the Phosphothreonine; by CDK5 mark. Residues 288–317 (HSLLPALCDSKIRSKALGSDHCPITLYLAL) are mitochondrial targeting sequence (MTS). Residue Asp307 participates in Mg(2+) binding. Cys309 bears the S-nitrosocysteine mark.

It belongs to the DNA repair enzymes AP/ExoA family. Monomer. Homodimer; disulfide-linked. Component of the SET complex, composed of at least APEX1, SET, ANP32A, HMGB2, NME1 and TREX1. Associates with the dimer XRCC5/XRCC6 in a DNA-dependent manner. Interacts with SIRT1; the interaction is increased in the context of genotoxic stress. Interacts with HDAC1, HDAC2 and HDAC3; the interactions are not dependent on the APEX1 acetylation status. Interacts with XRCC1; the interaction is induced by SIRT1 and increased with the APEX1 acetylated form. Interacts with NPM1 (via N-terminal domain); the interaction is RNA-dependent and decreases in hydrogen peroxide-damaged cells. Interacts (via N-terminus) with YBX1 (via C-terminus); the interaction is increased in presence of APEX1 acetylated at Lys-6 and Lys-7. Interacts with HNRNPL; the interaction is DNA-dependent. Interacts (via N-terminus) with KPNA1 and KPNA2. Interacts with TXN; the interaction stimulates the FOS/JUN AP-1 complex DNA-binding activity in a redox-dependent manner. Interacts with GZMA, KRT8, MDM2, POLB, PRDX6, PRPF19, RPLP0, TOMM20 and WDR77. Binds to CDK5. It depends on Mg(2+) as a cofactor. Mn(2+) serves as cofactor. Phosphorylated. Phosphorylation by kinase PKC or casein kinase CK2 results in enhanced redox activity that stimulates binding of the FOS/JUN AP-1 complex to its cognate binding site. AP-endodeoxyribonuclease activity is not affected by CK2-mediated phosphorylation. Phosphorylation of Thr-232 by CDK5 in response to MPP(+)/MPTP (1-methyl-4-phenylpyridinium) reduces AP-endodeoxyribonuclease activity resulting in accumulation of DNA damage and contributing to neuronal death. In terms of processing, acetylated on Lys-6 and Lys-7. Acetylation is increased by the transcriptional coactivator EP300 acetyltransferase, genotoxic agents like H(2)O(2) and methyl methanesulfonate (MMS). Acetylation increases its binding affinity to the negative calcium response element (nCaRE) DNA promoter. The acetylated form induces a stronger binding of YBX1 to the Y-box sequence in the MDR1 promoter than the unacetylated form. Deacetylated on lysines. Lys-6 and Lys-7 are deacetylated by SIRT1. Post-translationally, cleaved at Lys-30 by granzyme A to create the mitochondrial form; leading in reduction of binding to DNA, AP endodeoxyribonuclease activity, redox activation of transcription factors and to enhanced cell death. Cleaved by granzyme K; leading to intracellular ROS accumulation and enhanced cell death after oxidative stress. Cys-64 and Cys-92 are nitrosylated in response to nitric oxide (NO) and lead to the exposure of the nuclear export signal (NES). In terms of processing, ubiquitinated by MDM2; leading to translocation to the cytoplasm and proteasomal degradation. In terms of tissue distribution, expressed in both resting and stimulated B cells stimulated to switch (at protein level).

The protein localises to the nucleus. It localises to the nucleolus. Its subcellular location is the nucleus speckle. It is found in the endoplasmic reticulum. The protein resides in the cytoplasm. The protein localises to the mitochondrion. It catalyses the reaction a deoxyribonucleotide-2'-deoxyribose-5'-monophosphate-DNA + H2O = a 5'-end 2'-deoxyribose-5'-monophosphate-DNA + a 3'-end 2'-deoxyribonucleotide-DNA + H(+). The enzyme catalyses Exonucleolytic cleavage in the 3'- to 5'-direction to yield nucleoside 5'-phosphates.. It carries out the reaction a 3'-end 2'-deoxyribonucleotide-3'-phosphoglycolate-DNA + H2O = 2-phosphoglycolate + a 3'-end 2'-deoxyribonucleotide-DNA + H(+). The catalysed reaction is a 3'-end 2'-deoxyribonucleotide-8-oxoguanine-DNA + H2O = 8-oxo-dGMP + a 3'-end 2'-deoxyribonucleotide-DNA + H(+). Its activity is regulated as follows. NPM1 stimulates endodeoxyribonuclease activity on double-stranded DNA with AP sites, but inhibits endoribonuclease activity on single-stranded RNA containing AP sites. Multifunctional protein that plays a central role in the cellular response to oxidative stress. The two major activities of APEX1 are DNA repair and redox regulation of transcriptional factors. Functions as an apurinic/apyrimidinic (AP) endodeoxyribonuclease in the base excision repair (BER) pathway of DNA lesions induced by oxidative and alkylating agents. Initiates repair of AP sites in DNA by catalyzing hydrolytic incision of the phosphodiester backbone immediately adjacent to the damage, generating a single-strand break with 5'-deoxyribose phosphate and 3'-hydroxyl ends. Also incises at AP sites in the DNA strand of DNA/RNA hybrids, single-stranded DNA regions of R-loop structures, and single-stranded RNA molecules. Operates at switch sites of immunoglobulin (Ig) constant regions where it mediates Ig isotype class switch recombination. Processes AP sites induced by successive action of AICDA and UNG. Generates staggered nicks in opposite DNA strands resulting in the formation of double-strand DNA breaks that are finally resolved via non-homologous end joining repair pathway. Has 3'-5' exodeoxyribonuclease activity on mismatched deoxyribonucleotides at the 3' termini of nicked or gapped DNA molecules during short-patch BER. Possesses DNA 3' phosphodiesterase activity capable of removing lesions (such as phosphoglycolate and 8-oxoguanine) blocking the 3' side of DNA strand breaks. Also acts as an endoribonuclease involved in the control of single-stranded RNA metabolism. Plays a role in regulating MYC mRNA turnover by preferentially cleaving in between UA and CA dinucleotides of the MYC coding region determinant (CRD). In association with NMD1, plays a role in the rRNA quality control process during cell cycle progression. Acts as a loading factor for POLB onto non-incised AP sites in DNA and stimulates the 5'-terminal deoxyribose 5'-phosphate (dRp) excision activity of POLB. Exerts reversible nuclear redox activity to regulate DNA binding affinity and transcriptional activity of transcriptional factors by controlling the redox status of their DNA-binding domain, such as the FOS/JUN AP-1 complex after exposure to IR. Involved in calcium-dependent down-regulation of parathyroid hormone (PTH) expression by binding to negative calcium response elements (nCaREs). Together with HNRNPL or the dimer XRCC5/XRCC6, associates with nCaRE, acting as an activator of transcriptional repression. May also play a role in the epigenetic regulation of gene expression by participating in DNA demethylation. Stimulates the YBX1-mediated MDR1 promoter activity, when acetylated at Lys-6 and Lys-7, leading to drug resistance. Plays a role in protection from granzyme-mediated cellular repair leading to cell death. Binds DNA and RNA. Associates, together with YBX1, on the MDR1 promoter. Together with NPM1, associates with rRNA. In Mus musculus (Mouse), this protein is DNA repair nuclease/redox regulator APEX1 (Apex1).